A 421-amino-acid chain; its full sequence is Phosphatidylinositol 5-phosphate 4-kinase type-2 gamma (421 aa).

An N-acetylalanine modification is found at Ala2. Ser26 bears the Phosphoserine mark. The PIPK domain maps to 43-420 (AADPLVGVFL…RFLDFITNIF (378 aa)). A required for interaction with PIP5K1A region spans residues 69–75 (VMLLPDD). Ser349 is subject to Phosphoserine.

Interacts with PIP5K1A; the interaction inhibits PIP5K1A kinase activity. Post-translationally, phosphorylated, phosphorylation is induced by EGF.

It localises to the endoplasmic reticulum. Its subcellular location is the cytoplasm. The catalysed reaction is a 1,2-diacyl-sn-glycero-3-phospho-(1D-myo-inositol-5-phosphate) + ATP = a 1,2-diacyl-sn-glycero-3-phospho-(1D-myo-inositol-4,5-bisphosphate) + ADP + H(+). The enzyme catalyses 1,2-dihexadecanoyl-sn-glycero-3-phospho-(1D-myo-inositol-5-phosphate) + ATP = 1,2-dihexadecanoyl-sn-glycero-3-phospho-(1D-myo-inositol-4,5-bisphosphate) + ADP + H(+). It carries out the reaction 1,2-dihexadecanoyl-sn-glycero-3-phospho-(1D-myo-inositol-5-phosphate) + GTP = 1,2-dihexadecanoyl-sn-glycero-3-phospho-(1D-myo-inositol-4,5-bisphosphate) + GDP + H(+). Phosphatidylinositol 5-phosphate 4-kinase with low enzymatic activity. May be a GTP sensor, has higher GTP-dependent kinase activity than ATP-dependent kinase activity. PIP4Ks negatively regulate insulin signaling through a catalytic-independent mechanism. They interact with PIP5Ks and suppress PIP5K-mediated PtdIns(4,5)P2 synthesis and insulin-dependent conversion to PtdIns(3,4,5)P3. In Homo sapiens (Human), this protein is Phosphatidylinositol 5-phosphate 4-kinase type-2 gamma.